A 256-amino-acid polypeptide reads, in one-letter code: GDSL esterase/lipase CPRD49 (256 aa).

The N-terminal stretch at methionine 1 to glycine 27 is a signal peptide. Serine 15 (nucleophile) is an active-site residue. Asparagine 49 and asparagine 79 each carry an N-linked (GlcNAc...) asparagine glycan. Histidine 213 is an active-site residue. An N-linked (GlcNAc...) asparagine glycan is attached at asparagine 243.

It belongs to the 'GDSL' lipolytic enzyme family. In terms of tissue distribution, specifically expressed in anthers (stages 8-12).

Its subcellular location is the secreted. In Arabidopsis thaliana (Mouse-ear cress), this protein is GDSL esterase/lipase CPRD49 (CPRD49).